Consider the following 84-residue polypeptide: CDC42 small effector protein 2 (84 aa).

S-palmitoyl cysteine attachment occurs at residues cysteine 10 and cysteine 11. Positions 29 to 42 (IGEPTNFVHTAHVG) constitute a CRIB domain. Serine 43 and serine 52 each carry phosphoserine.

Belongs to the CDC42SE/SPEC family. In terms of assembly, interacts with CDC42 (in GTP-bound form). Interacts weakly with RAC1 and not at all with RHOA. Widely expressed. Expressed at higher level in T-lymphocytes. Highly expressed in CCRF-CEM T-lymphocytes, Jurkat T-lymphocytes, and Raji B-lymphocytes compared (at protein level).

Its subcellular location is the cytoplasm. The protein resides in the cytoskeleton. It is found in the cell membrane. It localises to the cell projection. The protein localises to the phagocytic cup. Functionally, probably involved in the organization of the actin cytoskeleton by acting downstream of CDC42, inducing actin filament assembly. Alters CDC42-induced cell shape changes. In activated T-cells, may play a role in CDC42-mediated F-actin accumulation at the immunological synapse. May play a role in early contractile events in phagocytosis in macrophages. This Homo sapiens (Human) protein is CDC42 small effector protein 2 (CDC42SE2).